Reading from the N-terminus, the 103-residue chain is Large ribosomal subunit protein uL24 (103 aa).

This sequence belongs to the universal ribosomal protein uL24 family. Part of the 50S ribosomal subunit.

Its function is as follows. One of two assembly initiator proteins, it binds directly to the 5'-end of the 23S rRNA, where it nucleates assembly of the 50S subunit. Functionally, one of the proteins that surrounds the polypeptide exit tunnel on the outside of the subunit. This chain is Large ribosomal subunit protein uL24, found in Bacillus anthracis (strain A0248).